We begin with the raw amino-acid sequence, 236 residues long: Phosphatidylserine decarboxylase proenzyme (236 aa).

Serine 194 serves as the catalytic Schiff-base intermediate with substrate; via pyruvic acid. At serine 194 the chain carries Pyruvic acid (Ser); by autocatalysis.

It belongs to the phosphatidylserine decarboxylase family. PSD-A subfamily. As to quaternary structure, heterodimer of a large membrane-associated beta subunit and a small pyruvoyl-containing alpha subunit. It depends on pyruvate as a cofactor. Post-translationally, is synthesized initially as an inactive proenzyme. Formation of the active enzyme involves a self-maturation process in which the active site pyruvoyl group is generated from an internal serine residue via an autocatalytic post-translational modification. Two non-identical subunits are generated from the proenzyme in this reaction, and the pyruvate is formed at the N-terminus of the alpha chain, which is derived from the carboxyl end of the proenzyme. The post-translation cleavage follows an unusual pathway, termed non-hydrolytic serinolysis, in which the side chain hydroxyl group of the serine supplies its oxygen atom to form the C-terminus of the beta chain, while the remainder of the serine residue undergoes an oxidative deamination to produce ammonia and the pyruvoyl prosthetic group on the alpha chain.

Its subcellular location is the cell membrane. It catalyses the reaction a 1,2-diacyl-sn-glycero-3-phospho-L-serine + H(+) = a 1,2-diacyl-sn-glycero-3-phosphoethanolamine + CO2. The protein operates within phospholipid metabolism; phosphatidylethanolamine biosynthesis; phosphatidylethanolamine from CDP-diacylglycerol: step 2/2. Catalyzes the formation of phosphatidylethanolamine (PtdEtn) from phosphatidylserine (PtdSer). The protein is Phosphatidylserine decarboxylase proenzyme of Rhodospirillum rubrum (strain ATCC 11170 / ATH 1.1.1 / DSM 467 / LMG 4362 / NCIMB 8255 / S1).